The chain runs to 163 residues: UPF0587 protein CG4646 (163 aa).

Cys33, Cys36, Cys68, and Cys71 together coordinate Zn(2+).

It belongs to the UPF0587 family.

This chain is UPF0587 protein CG4646, found in Drosophila melanogaster (Fruit fly).